A 567-amino-acid chain; its full sequence is Eukaryotic translation initiation factor 3 subunit D (567 aa).

Disordered regions lie at residues 12–34 and 122–160; these read PVKSAWGPPETEQIGGDIPYAPF and GQNVQRGGRGGRYGSSGGRGAGDTVVSRSSGAGGARGRR. Over residues 128–142 the composition is skewed to gly residues; sequence GGRGGRYGSSGGRGA. The RNA gate stretch occupies residues 300–314; the sequence is PFDYLTVNENAYDSP.

The protein belongs to the eIF-3 subunit D family. Component of the eukaryotic translation initiation factor 3 (eIF-3) complex. The eIF-3 complex appears to include tif32/eif3a, SPAC25G10.08/eif3b, tif33/eif3c, SPBC4C3.07/eif3f, tif35/eif3g and sum1/eif3i. This set of common subunits may also associate exclusively with either moe1/eif3d and int6/eif3e, or with SPAC821.05/eif3h and SPAC1751.03/eif3m. The eIF-3 complex may also include SPAC3A12.13c/eif3j.

It is found in the cytoplasm. MRNA cap-binding component of the eukaryotic translation initiation factor 3 (eIF-3) complex, which is involved in protein synthesis of a specialized repertoire of mRNAs and, together with other initiation factors, stimulates binding of mRNA and methionyl-tRNAi to the 40S ribosome. The eIF-3 complex specifically targets and initiates translation of a subset of mRNAs involved in cell proliferation. In the eIF-3 complex, eif3d specifically recognizes and binds the 7-methylguanosine cap of a subset of mRNAs. This is Eukaryotic translation initiation factor 3 subunit D (moe1) from Schizosaccharomyces pombe (strain 972 / ATCC 24843) (Fission yeast).